We begin with the raw amino-acid sequence, 242 residues long: 1-(5-phosphoribosyl)-5-[(5-phosphoribosylamino)methylideneamino] imidazole-4-carboxamide isomerase (242 aa).

D10 serves as the catalytic Proton acceptor. D132 (proton donor) is an active-site residue.

It belongs to the HisA/HisF family.

The protein localises to the cytoplasm. It catalyses the reaction 1-(5-phospho-beta-D-ribosyl)-5-[(5-phospho-beta-D-ribosylamino)methylideneamino]imidazole-4-carboxamide = 5-[(5-phospho-1-deoxy-D-ribulos-1-ylimino)methylamino]-1-(5-phospho-beta-D-ribosyl)imidazole-4-carboxamide. It functions in the pathway amino-acid biosynthesis; L-histidine biosynthesis; L-histidine from 5-phospho-alpha-D-ribose 1-diphosphate: step 4/9. The polypeptide is 1-(5-phosphoribosyl)-5-[(5-phosphoribosylamino)methylideneamino] imidazole-4-carboxamide isomerase (Streptococcus sanguinis (strain SK36)).